We begin with the raw amino-acid sequence, 434 residues long: FAD-dependent monooxygenase cfoG (434 aa).

Residues 1–22 (MKSSPGLHIIIVGAGITGLATA) form the signal peptide. E36 is a binding site for FAD. Catalysis depends on residues R193 and Y233. Residues D314 and G327 each contribute to the FAD site.

This sequence belongs to the paxM FAD-dependent monooxygenase family. In terms of assembly, monomer. The cofactor is FAD.

It participates in secondary metabolite biosynthesis; flavonoid biosynthesis. Its function is as follows. Monooxygenase; part of the gene cluster that mediates the biosynthesis of chlorflavonin, a fungal flavonoid with acetolactate synthase inhibitory activity. Within the pathway, cfoG is responsible for the hydroxylation of the flavonoid skeleton at position C8. The pathway begins with the PKS-NRPS hybrid synthetase cfoA that uses benzoic acid or p-hydroxybenzoic acid as a starter unit with four rounds of chain elongation using malonyl-CoA to form the chalcone skeleton. Then, a new type of chalcone isomerase, cfoK, catalyzes the conversion of the chalcone into a flavanone by a histidine-mediated oxa-Michael addition mechanism. The desaturation of flavanone to flavone is catalyzed by a new type of flavone synthase, the flavin mononucleotide (FMN)-dependent oxidoreductase cfoJ. Monooxygenases cfoF, cfoG, and P450 cfoH are responsible for the hydroxylation of the flavonoid skeleton at sites C3, C8, and C2', respectively. Like cfoF, the dehydratase cfoI plays also a role in the hydroxylation of position C3. Methyltransferases cfoB, cfoC, and cfoD then catalyze the methylation of C7-OH, C8-OH, and C3-OH, respectively. Finally, the monooxygenase cfoE is responsible for the chlorination of flavonoid at position C3'. This Aspergillus candidus protein is FAD-dependent monooxygenase cfoG.